A 433-amino-acid polypeptide reads, in one-letter code: Probable dipeptidase (433 aa).

Cysteine 20 is an active-site residue.

It belongs to the peptidase C69 family.

The enzyme catalyses an L-aminoacyl-L-amino acid + H2O = 2 an L-alpha-amino acid. In Salmonella dublin, this protein is Probable dipeptidase (pipD).